We begin with the raw amino-acid sequence, 188 residues long: Probable nicotinate-nucleotide adenylyltransferase (188 aa).

The protein belongs to the NadD family.

The enzyme catalyses nicotinate beta-D-ribonucleotide + ATP + H(+) = deamido-NAD(+) + diphosphate. Its pathway is cofactor biosynthesis; NAD(+) biosynthesis; deamido-NAD(+) from nicotinate D-ribonucleotide: step 1/1. Its function is as follows. Catalyzes the reversible adenylation of nicotinate mononucleotide (NaMN) to nicotinic acid adenine dinucleotide (NaAD). This is Probable nicotinate-nucleotide adenylyltransferase from Listeria monocytogenes serotype 4b (strain F2365).